A 233-amino-acid chain; its full sequence is MAIQHRDPRGGGGSRDARTNRRIKAREVRVIGAEGEQLGVLPIDQALARAQELGMDLVEVSPMAKPPVCKIMDYGRFKYLEKKKQNEAKKKQVVVQLKEVKLRPRTEEHDYDTKIKKVREFLAEANKARITVMFRGREMSHRELGQKVLQRVIEDLRDVAVIESAPRMEGRQMFMILAPNPKMLQSQRDKAKAAAAAAPAAAPAAPAAGAPAPAPAPAAPAPAPAAADPAAQR.

Disordered stretches follow at residues 1 to 21 (MAIQ…RTNR) and 184 to 233 (LQSQ…AAQR). A compositionally biased stretch (low complexity) spans 193 to 211 (AAAAAAPAAAPAAPAAGAP). Positions 212–223 (APAPAPAAPAPA) are enriched in pro residues. Residues 224-233 (PAAADPAAQR) show a composition bias toward low complexity.

Belongs to the IF-3 family. In terms of assembly, monomer.

Its subcellular location is the cytoplasm. In terms of biological role, IF-3 binds to the 30S ribosomal subunit and shifts the equilibrium between 70S ribosomes and their 50S and 30S subunits in favor of the free subunits, thus enhancing the availability of 30S subunits on which protein synthesis initiation begins. This is Translation initiation factor IF-3 from Anaeromyxobacter dehalogenans (strain 2CP-C).